Here is a 511-residue protein sequence, read N- to C-terminus: Maturase K (511 aa).

This sequence belongs to the intron maturase 2 family. MatK subfamily.

The protein localises to the plastid. In terms of biological role, usually encoded in the trnK tRNA gene intron. Probably assists in splicing its own and other chloroplast group II introns. The sequence is that of Maturase K from Lathraea clandestina (Purple toothwort).